Here is a 65-residue protein sequence, read N- to C-terminus: Conotoxin TsMRCL-05 (65 aa).

The signal sequence occupies residues 1-22; it reads MHCLPVLVILLLLIASTPSVDA. A propeptide spanning residues 23 to 52 is cleaved from the precursor; sequence RPNPKDDVPLASFHGAVNAKRYLRTLWNSR. I64 is modified (isoleucine amide).

Belongs to the conotoxin T superfamily. Contains 2 disulfide bonds that can be either 'C1-C3, C2-C4' or 'C1-C4, C2-C3', since these disulfide connectivities have been observed for conotoxins with cysteine framework V (for examples, see AC P0DQQ7 and AC P81755). Expressed by the venom duct.

Its subcellular location is the secreted. This chain is Conotoxin TsMRCL-05, found in Conus tessulatus (Tessellate cone).